The chain runs to 852 residues: Lon protease homolog 2, peroxisomal (852 aa).

The residue at position 2 (Ser-2) is an N-acetylserine. Residues Leu-13–Ile-222 enclose the Lon N-terminal domain. An ATP-binding site is contributed by Gly-375–Thr-382. Positions Leu-651–Gly-837 constitute a Lon proteolytic domain. Residues Ser-743 and Lys-786 contribute to the active site. The short motif at Ser-850–Leu-852 is the Microbody targeting signal element.

It belongs to the peptidase S16 family. In terms of assembly, interacts with PEX5. Interacts with TYSND1. May interact with enzymes involved in beta-oxidation of fatty acids, including ACOX1/AOX.

The protein resides in the peroxisome matrix. It carries out the reaction Hydrolysis of proteins in presence of ATP.. In terms of biological role, ATP-dependent serine protease that mediates the selective degradation of misfolded and unassembled polypeptides in the peroxisomal matrix. Necessary for type 2 peroxisome targeting signal (PTS2)-containing protein processing and facilitates peroxisome matrix protein import. May indirectly regulate peroxisomal fatty acid beta-oxidation through degradation of the self-processed forms of TYSND1. The sequence is that of Lon protease homolog 2, peroxisomal (Lonp2) from Rattus norvegicus (Rat).